Reading from the N-terminus, the 73-residue chain is UPF0150 protein ssl0259 (73 aa).

The protein belongs to the UPF0150 family.

The chain is UPF0150 protein ssl0259 from Synechocystis sp. (strain ATCC 27184 / PCC 6803 / Kazusa).